The sequence spans 395 residues: MRN complex-interacting protein (395 aa).

Basic and acidic residues predominate over residues 90–100 (DPKSEQEEAHV). Disordered regions lie at residues 90-155 (DPKS…GGNC) and 180-275 (KRSS…FGES). Residues 104-113 (SKYTDQTTEG) are compositionally biased toward polar residues. Positions 117–127 (EKDDEDEDENV) are enriched in acidic residues. The short motif at 142 to 145 (RKKM) is the Nuclear localization signal (NLS) element. Residues 183-195 (SSSWNKGSVSKYS) show a composition bias toward low complexity. 2 stretches are compositionally biased toward polar residues: residues 224-244 (ACSS…QIKS) and 260-270 (QSESPSVSSHQ).

The protein belongs to the MRNIP family.

Its subcellular location is the nucleus. The protein resides in the nucleoplasm. Functionally, plays a role in the cellular response to DNA damage and the maintenance of genome stability through its association with the MRN damage-sensing complex. Promotes chromatin loading and activity of the MRN complex to facilitate subsequent ATM-mediated DNA damage response signaling and DNA repair. This Danio rerio (Zebrafish) protein is MRN complex-interacting protein.